Here is a 960-residue protein sequence, read N- to C-terminus: Vacuolar membrane protease (960 aa).

Residues 1–57 (MADNNSSSGSLVIDEQDYDVHEAGQQGQQGQQKHQQRQQERPSLITRVFRSVFGYRK) are Cytoplasmic-facing. The segment at 22 to 41 (EAGQQGQQGQQKHQQRQQER) is disordered. The segment covering 24–33 (GQQGQQGQQK) has biased composition (low complexity). Residues 58–78 (TSLSLFVVATIALCVSLSYID) traverse the membrane as a helical segment. The Vacuolar portion of the chain corresponds to 79-401 (NSVDFISFPT…FTISTSQLFK (323 aa)). Asparagine 148 carries N-linked (GlcNAc...) asparagine glycosylation. Positions 189 and 201 each coordinate Zn(2+). Glutamate 235 functions as the Proton acceptor in the catalytic mechanism. Zn(2+)-binding residues include glutamate 236, glutamate 261, and histidine 333. Residues 402 to 422 (INVALLTVFPILNGLLLLYTI) form a helical membrane-spanning segment. Residues 423-432 (RSRKWQVSFS) lie on the Cytoplasmic side of the membrane. The chain crosses the membrane as a helical span at residues 433–453 (SAISIPVALLVTMFIVVYLVV). Residues 454–476 (ESYKSFNQYLPSSRPLLLVATIT) lie on the Vacuolar side of the membrane. The chain crosses the membrane as a helical span at residues 477-497 (SILLLVFSIILVAFSFFSIIA). Residues 498-502 (EENLR) are Cytoplasmic-facing. The chain crosses the membrane as a helical span at residues 503–523 (LLAIVELSFAYWVGLAFTTHG). Over 524–535 (LSGAESARHSGE) the chain is Vacuolar. Residues 536 to 556 (FAVSILFTLEAVASFLGLIGW) form a helical membrane-spanning segment. Residues 557–635 (SLCRNRSHLQ…FGYDWSLQYL (79 aa)) lie on the Cytoplasmic side of the membrane. Over residues 587–605 (NDHDHEHRHGHEDNEHGEA) the composition is skewed to basic and acidic residues. Residues 587–614 (NDHDHEHRHGHEDNEHGEAHVQQQSQSR) form a disordered region. The helical transmembrane segment at 636–656 (ITVPLSIFIIYNSGWLVLEGV) threads the bilayer. N-linked (GlcNAc...) asparagine glycosylation is present at asparagine 657. Residues 657–668 (NKTLQESAKAET) are Vacuolar-facing. A helical membrane pass occupies residues 669 to 689 (FVYNLLWIVSVSLVLPLIPFA). Residues 690-696 (GKLNRYM) are Cytoplasmic-facing. The helical transmembrane segment at 697–717 (VFVLIAIGVLGTLLVHVVQPF) threads the bilayer. Residues 718-960 (NEANPLKLRF…LVAYTKQVHV (243 aa)) are Vacuolar-facing. N-linked (GlcNAc...) asparagine glycosylation is found at asparagine 736, asparagine 763, asparagine 803, asparagine 875, and asparagine 921.

Belongs to the peptidase M28 family. It depends on Zn(2+) as a cofactor.

It localises to the vacuole membrane. Its function is as follows. May be involved in vacuolar sorting and osmoregulation. The chain is Vacuolar membrane protease from Lodderomyces elongisporus (strain ATCC 11503 / CBS 2605 / JCM 1781 / NBRC 1676 / NRRL YB-4239) (Yeast).